The chain runs to 1149 residues: Protogenin A (1149 aa).

The signal sequence occupies residues 1–23 (MASFKRDLYLFLAVFLSISGVWS). At 24–932 (FSELFFIKEP…GFYHLDQRSM (909 aa)) the chain is on the extracellular side. 4 Ig-like domains span residues 27–117 (LFFI…ARLT), 122–209 (STFT…ATLT), 222–309 (PRII…ANIT), and 314–399 (PSLV…RLIV). Cystine bridges form between C48–C100 and C143–C192. Residue N78 is glycosylated (N-linked (GlcNAc...) asparagine). N230 carries an N-linked (GlcNAc...) asparagine glycan. C243 and C291 are oxidised to a cystine. 2 N-linked (GlcNAc...) asparagine glycosylation sites follow: N300 and N307. C335 and C382 are joined by a disulfide. 5 Fibronectin type-III domains span residues 408–502 (APRN…TLED), 504–600 (PLRA…TPKA), 605–704 (VPLA…VRDR), 711–804 (PPHH…TLPE), and 809–905 (APVG…IHTD). N460 and N475 each carry an N-linked (GlcNAc...) asparagine glycan. Residue N617 is glycosylated (N-linked (GlcNAc...) asparagine). Residues 646 to 666 (GQSEAAQAQIPPHHRQHTIGG) form a disordered region. N720, N741, and N753 each carry an N-linked (GlcNAc...) asparagine glycan. Residues 933-953 (AGIAVGVCIALTCIIICILIL) form a helical membrane-spanning segment. Residues 954–1149 (ACRSKTRKSC…EQEMTDLHPV (196 aa)) are Cytoplasmic-facing. Residues 1060 to 1149 (YTETSPENPP…EQEMTDLHPV (90 aa)) are disordered. Residues 1061 to 1073 (TETSPENPPTTLQ) show a composition bias toward polar residues. The segment covering 1084-1106 (EGSHSSEGSHETSDSGRYSHDDT) has biased composition (basic and acidic residues).

This sequence belongs to the immunoglobulin superfamily. DCC family. Expression begins in the posterior region of the embryo and this posterior restriction persists at the 4 s stage. At early somite stages, expressed along the neural tube with lower levels in the lateral and paraxial mesoderm. Expression decreases caudally and rostrally becomes restricted to the ventral part of the brain. Widespread in the spinal cord at 30 hours post-fertilization (hpf) and is also expressed in the lens from this time. At 40 hpf, expression is restricted to the lens.

Its subcellular location is the membrane. May play a role in anteroposterior axis elongation. This is Protogenin A from Danio rerio (Zebrafish).